The chain runs to 180 residues: Large ribosomal subunit protein uL6 (180 aa).

This sequence belongs to the universal ribosomal protein uL6 family. In terms of assembly, part of the 50S ribosomal subunit.

This protein binds to the 23S rRNA, and is important in its secondary structure. It is located near the subunit interface in the base of the L7/L12 stalk, and near the tRNA binding site of the peptidyltransferase center. The chain is Large ribosomal subunit protein uL6 from Borreliella afzelii (strain PKo) (Borrelia afzelii).